Consider the following 479-residue polypeptide: Glycogen synthase (479 aa).

K15 serves as a coordination point for ADP-alpha-D-glucose.

This sequence belongs to the glycosyltransferase 1 family. Bacterial/plant glycogen synthase subfamily.

The enzyme catalyses [(1-&gt;4)-alpha-D-glucosyl](n) + ADP-alpha-D-glucose = [(1-&gt;4)-alpha-D-glucosyl](n+1) + ADP + H(+). It functions in the pathway glycan biosynthesis; glycogen biosynthesis. Its function is as follows. Synthesizes alpha-1,4-glucan chains using ADP-glucose. The polypeptide is Glycogen synthase (Clostridium novyi (strain NT)).